The sequence spans 165 residues: MKSIYITGYMGAGKTTIGKALSKELHMDVVDTDQKIEEKQGKVIRDIFAEEGEMAFREYESEMLCSLPVDNVIITTGGGIVEREENRKWMKENGTVVYLYCDPHVIAERLREDTTRPLFQKKDIDAFVTKFESRRAYYEEAHIHIDTTNKSVKQIMNELKEKINE.

11-16 (GAGKTT) contributes to the ATP binding site. Thr15 provides a ligand contact to Mg(2+). Substrate contacts are provided by Asp33, Arg57, and Gly78. Residue Arg116 coordinates ATP. Substrate is bound at residue Arg134.

This sequence belongs to the shikimate kinase family. Monomer. Mg(2+) serves as cofactor.

Its subcellular location is the cytoplasm. The enzyme catalyses shikimate + ATP = 3-phosphoshikimate + ADP + H(+). It functions in the pathway metabolic intermediate biosynthesis; chorismate biosynthesis; chorismate from D-erythrose 4-phosphate and phosphoenolpyruvate: step 5/7. Catalyzes the specific phosphorylation of the 3-hydroxyl group of shikimic acid using ATP as a cosubstrate. The sequence is that of Shikimate kinase from Bacillus anthracis (strain A0248).